The sequence spans 184 residues: Shikimate kinase (184 aa).

Residue 17–22 (SVGKTS) coordinates ATP. Threonine 21 contributes to the Mg(2+) binding site. Positions 39 and 85 each coordinate substrate.

Belongs to the shikimate kinase family. In terms of assembly, monomer. Requires Mg(2+) as cofactor.

The protein resides in the cytoplasm. The enzyme catalyses shikimate + ATP = 3-phosphoshikimate + ADP + H(+). Its pathway is metabolic intermediate biosynthesis; chorismate biosynthesis; chorismate from D-erythrose 4-phosphate and phosphoenolpyruvate: step 5/7. Catalyzes the specific phosphorylation of the 3-hydroxyl group of shikimic acid using ATP as a cosubstrate. This is Shikimate kinase from Chlamydia muridarum (strain MoPn / Nigg).